A 489-amino-acid polypeptide reads, in one-letter code: Probable cytochrome P450 522A1 (489 aa).

Residues 1-21 (MILTIVIIILTVIFVNKYLLN) form a helical membrane-spanning segment. C433 serves as a coordination point for heme.

The protein belongs to the cytochrome P450 family. It depends on heme as a cofactor.

Its subcellular location is the membrane. The sequence is that of Probable cytochrome P450 522A1 (cyp522A1) from Dictyostelium discoideum (Social amoeba).